The sequence spans 148 residues: Glutamate mutase sigma subunit 2 (148 aa).

Residues 1–134 (MRTVILGVIG…EALKADLGHR (134 aa)) enclose the B12-binding domain. Residues 11–15 (SDAHV), His-14, 59–61 (SSL), and 90–94 (NLAVG) each bind adenosylcob(III)alamin. Residues 129 to 141 (ADLGHRSREEASS) show a composition bias toward basic and acidic residues. The tract at residues 129–148 (ADLGHRSREEASSEKVQLGS) is disordered.

It belongs to the methylaspartate mutase GlmS subunit family. Heterotetramer composed of 2 epsilon subunits (GlmE) and 2 sigma subunits (GlmS). GlmE exists as a homodimer and GlmS as a monomer. It depends on adenosylcob(III)alamin as a cofactor.

The catalysed reaction is (2S,3S)-3-methyl-L-aspartate = L-glutamate. The protein operates within amino-acid degradation; L-glutamate degradation via mesaconate pathway; acetate and pyruvate from L-glutamate: step 1/4. In terms of biological role, catalyzes the carbon skeleton rearrangement of L-glutamate to L-threo-3-methylaspartate ((2S,3S)-3-methylaspartate). In Haloarcula marismortui (strain ATCC 43049 / DSM 3752 / JCM 8966 / VKM B-1809) (Halobacterium marismortui), this protein is Glutamate mutase sigma subunit 2.